The following is a 160-amino-acid chain: Large ribosomal subunit protein eL21B (160 aa).

A Glycyl lysine isopeptide (Lys-Gly) (interchain with G-Cter in ubiquitin) cross-link involves residue K32.

It belongs to the eukaryotic ribosomal protein eL21 family. As to quaternary structure, component of the large ribosomal subunit (LSU). Mature yeast ribosomes consist of a small (40S) and a large (60S) subunit. The 40S small subunit contains 1 molecule of ribosomal RNA (18S rRNA) and 33 different proteins (encoded by 57 genes). The large 60S subunit contains 3 rRNA molecules (25S, 5.8S and 5S rRNA) and 46 different proteins (encoded by 81 genes).

Its subcellular location is the cytoplasm. Its function is as follows. Component of the ribosome, a large ribonucleoprotein complex responsible for the synthesis of proteins in the cell. The small ribosomal subunit (SSU) binds messenger RNAs (mRNAs) and translates the encoded message by selecting cognate aminoacyl-transfer RNA (tRNA) molecules. The large subunit (LSU) contains the ribosomal catalytic site termed the peptidyl transferase center (PTC), which catalyzes the formation of peptide bonds, thereby polymerizing the amino acids delivered by tRNAs into a polypeptide chain. The nascent polypeptides leave the ribosome through a tunnel in the LSU and interact with protein factors that function in enzymatic processing, targeting, and the membrane insertion of nascent chains at the exit of the ribosomal tunnel. This is Large ribosomal subunit protein eL21B from Saccharomyces cerevisiae (strain ATCC 204508 / S288c) (Baker's yeast).